We begin with the raw amino-acid sequence, 128 residues long: Fluoride-specific ion channel FluC (128 aa).

The next 4 membrane-spanning stretches (helical) occupy residues 7 to 29 (LNFI…LGLR), 36 to 57 (PWGT…VALI), 65 to 94 (AWIR…DMLE), and 98 to 126 (YATA…VRLL). Asn43 is a fluoride binding site. Na(+) contacts are provided by Gly77 and Thr80. 3 residues coordinate fluoride: Tyr104, Ser108, and Ser112.

This sequence belongs to the fluoride channel Fluc/FEX (TC 1.A.43) family. In terms of assembly, homodimer.

The protein resides in the cell inner membrane. The catalysed reaction is fluoride(in) = fluoride(out). Its activity is regulated as follows. Na(+) is not transported, but it plays an essential structural role and its presence is essential for fluoride channel function. The Na(+)-binding site is specific for Na(+) over most other cations including K(+) and Mg(2+). Fluoride efflux is inhibited by Li(2+). Its function is as follows. Fluoride-specific ion channel. Important for reducing fluoride concentration in the cell, thus reducing its toxicity. Is highly specific for fluoride ions and cannot transport chloride ions. The sequence is that of Fluoride-specific ion channel FluC from Bordetella pertussis (strain Tohama I / ATCC BAA-589 / NCTC 13251).